The chain runs to 345 residues: Peptidoglycan-recognition protein LE (345 aa).

Basic and acidic residues predominate over residues 1–16 (MSESGIKKLSQERTRE). The disordered stretch occupies residues 1 to 38 (MSESGIKKLSQERTREWLASQEDEELESIAESSVVDSL). N-linked (GlcNAc...) asparagine glycans are attached at residues asparagine 52, asparagine 95, asparagine 98, and asparagine 106. Positions 124 to 152 (NRRDRRHVSPPRDNAPKTPTHFEDDYQDE) are disordered. One can recognise an N-acetylmuramoyl-L-alanine amidase domain in the interval 198 to 324 (PVKYVVILHT…CQCNSTESPG (127 aa)). Peptidoglycan-binding positions include histidine 206, 229–240 (HIESRGWNDIAY), arginine 254, 261–267 (AHTLGYN), and 314–322 (HCQCNSTES). N-linked (GlcNAc...) asparagine glycosylation occurs at asparagine 318.

The protein belongs to the N-acetylmuramoyl-L-alanine amidase 2 family. As to quaternary structure, monomer. Peptidoglycan binding induces oligomerization. Expressed in hemolymph. Localizes at the lumenal surface of the trachea (at protein level).

The protein localises to the secreted. In terms of biological role, peptidoglycan-recognition protein that plays a key role in innate immunity by binding to murein peptidoglycans (PGN) of Gram-negative bacteria and activating the imd/Relish pathway. Has no activity against on Gram-positive bacteria. Binds to diaminopimelic acid-type PGN (DAP-type PGN), an activator of the imd/Relish pathway. Functions synergistically with PGRP-LC in producing resistance to E.coli and B.megaterium infections, which have the DAP-type peptidoglycan. Acts both upstream and in parallel with PGRP-LC in the imd/Relish pathway, and is required for infection-dependent activation of melanization. Required for Relish processing and nuclear translocation following proteolytic cleavage. Its localization suggests a role in the recognition and subsequent activation of the signaling at the first point of contact with invading bacteria. In Drosophila melanogaster (Fruit fly), this protein is Peptidoglycan-recognition protein LE (PGRP-LE).